The sequence spans 37 residues: Large ribosomal subunit protein bL36 (37 aa).

This sequence belongs to the bacterial ribosomal protein bL36 family.

The polypeptide is Large ribosomal subunit protein bL36 (Beutenbergia cavernae (strain ATCC BAA-8 / DSM 12333 / CCUG 43141 / JCM 11478 / NBRC 16432 / NCIMB 13614 / HKI 0122)).